Here is a 277-residue protein sequence, read N- to C-terminus: GPALPP motifs-containing protein 1 (277 aa).

Residues 1 to 240 (MARDLIGPAL…VWTDTPADRE (240 aa)) are disordered. The residue at position 2 (A2) is an N-acetylalanine. The short motif at 7 to 12 (GPALPP) is the GPALPP motif 1 element. S28 is modified (phosphoserine). Residues 32 to 37 (GPALPP) carry the GPALPP motif 2 motif. Composition is skewed to acidic residues over residues 60 to 69 (GNQESEEDDT) and 81 to 90 (DDDDDDDDEG). The GPALPP motif 3 signature appears at 93-98 (GPALPP). S106 is modified (phosphoserine). Pro residues predominate over residues 108-117 (PRPMIGPALP). The short motif at 113–118 (GPALPP) is the GPALPP motif 4 element. Phosphoserine is present on residues S138 and S143. T147 is subject to Phosphothreonine. Phosphoserine occurs at positions 149 and 150. Residues 172–196 (EFEKRAQRMKEKLTKGDDDSSKPIT) show a composition bias toward basic and acidic residues.

The polypeptide is GPALPP motifs-containing protein 1 (GPALPP1) (Bos taurus (Bovine)).